The chain runs to 507 residues: Beta-Ala-His dipeptidase (507 aa).

Residues 1 to 26 (MDPKLGRMAASLLAVLLLLLERGMFS) form the signal peptide. His-132 serves as a coordination point for Zn(2+). Residue Asp-134 is part of the active site. Position 165 (Asp-165) interacts with Zn(2+). The active-site Proton acceptor is Glu-199. Zn(2+) is bound at residue Glu-200. Residue Ser-219 is modified to Phosphoserine. Asp-228 lines the Zn(2+) pocket. Asn-322 and Asn-382 each carry an N-linked (GlcNAc...) asparagine glycan. His-478 serves as a coordination point for Zn(2+).

It belongs to the peptidase M20A family. As to quaternary structure, homodimer. The cofactor is Zn(2+). Found in serum and adult nervous central system. Absent in serum from patients with homocarnosinosis.

Its subcellular location is the secreted. It carries out the reaction Preferential hydrolysis of the beta-Ala-|-His dipeptide (carnosine), and also anserine, Xaa-|-His dipeptides and other dipeptides including homocarnosine.. It catalyses the reaction carnosine + H2O = beta-alanine + L-histidine. The enzyme catalyses anserine + H2O = N(pros)-methyl-L-histidine + beta-alanine. The catalysed reaction is L-alanyl-L-histidine + H2O = L-histidine + L-alanine. It carries out the reaction glycyl-L-histidine + H2O = L-histidine + glycine. It catalyses the reaction L-homocarnosine + H2O = 4-aminobutanoate + L-histidine. Activated by cadmium ions. Inhibited by the metal chelator 1,10-o-phenantrolin. The inhibitory concentration 50% (IC(50)) is 5 uM. Its function is as follows. Catalyzes the peptide bond hydrolysis in Xaa-His dipeptides, displaying the highest activity toward carnosine (beta-alanyl-L-histidine) and anserine (beta-alanyl-3-methyl-histidine). This Homo sapiens (Human) protein is Beta-Ala-His dipeptidase.